Reading from the N-terminus, the 315-residue chain is Methionine import ATP-binding protein MetN (315 aa).

One can recognise an ABC transporter domain in the interval 2–219; it reads IEIEKVCVDF…PQHAFTQQLV (218 aa). 16–23 is an ATP binding site; sequence GTSGAGKS.

Belongs to the ABC transporter superfamily. Methionine importer (TC 3.A.1.24) family. As to quaternary structure, the complex is composed of two ATP-binding proteins (MetN), two transmembrane proteins (MetI) and a solute-binding protein (MetQ).

It is found in the cell inner membrane. It carries out the reaction L-methionine(out) + ATP + H2O = L-methionine(in) + ADP + phosphate + H(+). It catalyses the reaction D-methionine(out) + ATP + H2O = D-methionine(in) + ADP + phosphate + H(+). Functionally, part of the ABC transporter complex MetNIQ involved in methionine import. Responsible for energy coupling to the transport system. This Salmonella enteritidis protein is Methionine import ATP-binding protein MetN.